An 81-amino-acid polypeptide reads, in one-letter code: Neurotoxin LmNaTx11.1 (81 aa).

An N-terminal signal peptide occupies residues 1–18 (MKIVIIFFIAMMAVGVYS). Residues 19–80 (KDGYLVKKNG…PTYPSSKTCS (62 aa)) form the LCN-type CS-alpha/beta domain. Disulfide bonds link cysteine 29–cysteine 79, cysteine 33–cysteine 56, cysteine 42–cysteine 61, and cysteine 46–cysteine 63.

This sequence belongs to the long (4 C-C) scorpion toxin superfamily. Sodium channel inhibitor family. Beta subfamily. Expressed by the venom gland.

It localises to the secreted. Binds voltage-independently at site-4 of sodium channels (Nav) and shift the voltage of activation toward more negative potentials thereby affecting sodium channel activation and promoting spontaneous and repetitive firing. In Lychas mucronatus (Chinese swimming scorpion), this protein is Neurotoxin LmNaTx11.1.